The following is a 694-amino-acid chain: Polyphosphate kinase (694 aa).

Position 45 (asparagine 45) interacts with ATP. Residues arginine 367 and arginine 397 each contribute to the Mg(2+) site. Histidine 427 functions as the Phosphohistidine intermediate in the catalytic mechanism. The ATP site is built by tyrosine 460, arginine 553, and histidine 580.

This sequence belongs to the polyphosphate kinase 1 (PPK1) family. Mg(2+) is required as a cofactor. In terms of processing, an intermediate of this reaction is the autophosphorylated ppk in which a phosphate is covalently linked to a histidine residue through a N-P bond.

The catalysed reaction is [phosphate](n) + ATP = [phosphate](n+1) + ADP. In terms of biological role, catalyzes the reversible transfer of the terminal phosphate of ATP to form a long-chain polyphosphate (polyP). This Campylobacter jejuni subsp. jejuni serotype O:6 (strain 81116 / NCTC 11828) protein is Polyphosphate kinase.